The sequence spans 150 residues: Endoribonuclease YbeY (150 aa).

Zn(2+)-binding residues include His-102, His-106, and His-112.

The protein belongs to the endoribonuclease YbeY family. It depends on Zn(2+) as a cofactor.

It is found in the cytoplasm. In terms of biological role, single strand-specific metallo-endoribonuclease involved in late-stage 70S ribosome quality control and in maturation of the 3' terminus of the 16S rRNA. The sequence is that of Endoribonuclease YbeY from Thermotoga sp. (strain RQ2).